The sequence spans 231 residues: MRQPAVRLVRLGRVPYAELLGLQDRWLRRLQAEPGIEAPSGTEAGALLLCEPAGPVYTAGLRGGLTPEETARLRALGAEVRVTGRGGLATFHGPGQLLCHPVLDLRRLGLRLRMHVASLEACAVRLCELQGLQDARARPPPYTGVWLDDRKICAIGVRCGRHITSHGLALNCSTDLTWFEHIVPCGLVGTGVTSLSKELQRHVTVEEVMPPFLVAFKEIYKCTLISEDSPN.

The transit peptide at Met-1–Gln-31 directs the protein to the mitochondrion. The region spanning Gly-41–Leu-224 is the BPL/LPL catalytic domain. Substrate is bound by residues Arg-85–His-92, Ala-154–Gly-156, and Gly-167–Ala-169. The Acyl-thioester intermediate role is filled by Cys-185.

The protein belongs to the LipB family.

It localises to the mitochondrion. It catalyses the reaction octanoyl-[ACP] + L-lysyl-[protein] = N(6)-octanoyl-L-lysyl-[protein] + holo-[ACP] + H(+). The protein operates within protein modification; protein lipoylation via endogenous pathway; protein N(6)-(lipoyl)lysine from octanoyl-[acyl-carrier-protein]: step 1/2. Its function is as follows. Catalyzes the transfer of endogenously produced octanoic acid from octanoyl-acyl-carrier-protein (octanoyl-ACP) onto the lipoyl domains of lipoate-dependent enzymes such as the protein H of the glycine cleavage system (GCSH). Lipoyl-ACP can also act as a substrate although octanoyl-ACP is likely to be the physiological substrate. The protein is Octanoyl-[acyl-carrier-protein]:protein N-octanoyltransferase LIPT2, mitochondrial of Homo sapiens (Human).